We begin with the raw amino-acid sequence, 430 residues long: tRNA(Ile)-lysidine synthase (430 aa).

21–26 (SGGLDS) is an ATP binding site.

This sequence belongs to the tRNA(Ile)-lysidine synthase family.

It localises to the cytoplasm. The catalysed reaction is cytidine(34) in tRNA(Ile2) + L-lysine + ATP = lysidine(34) in tRNA(Ile2) + AMP + diphosphate + H(+). In terms of biological role, ligates lysine onto the cytidine present at position 34 of the AUA codon-specific tRNA(Ile) that contains the anticodon CAU, in an ATP-dependent manner. Cytidine is converted to lysidine, thus changing the amino acid specificity of the tRNA from methionine to isoleucine. This is tRNA(Ile)-lysidine synthase from Salmonella choleraesuis (strain SC-B67).